We begin with the raw amino-acid sequence, 71 residues long: Long neurotoxin 5 (71 aa).

5 cysteine pairs are disulfide-bonded: Cys-3–Cys-20, Cys-14–Cys-41, Cys-26–Cys-30, Cys-45–Cys-56, and Cys-57–Cys-62.

The protein belongs to the three-finger toxin family. Long-chain subfamily. Type II alpha-neurotoxin sub-subfamily. As to expression, expressed by the venom gland.

Its subcellular location is the secreted. Binds with high affinity to muscular (alpha-1/CHRNA1) and neuronal (alpha-7/CHRNA7) nicotinic acetylcholine receptor (nAChR) and inhibits acetylcholine from binding to the receptor, thereby impairing neuromuscular and neuronal transmission. The sequence is that of Long neurotoxin 5 from Naja naja (Indian cobra).